The primary structure comprises 391 residues: Phosphoglycerate kinase (391 aa).

Substrate contacts are provided by residues D21 to N23, R36, H59 to R62, R114, and R147. ATP is bound by residues K198, E315, and G344–T347.

Belongs to the phosphoglycerate kinase family. In terms of assembly, monomer.

It is found in the cytoplasm. The catalysed reaction is (2R)-3-phosphoglycerate + ATP = (2R)-3-phospho-glyceroyl phosphate + ADP. Its pathway is carbohydrate degradation; glycolysis; pyruvate from D-glyceraldehyde 3-phosphate: step 2/5. This is Phosphoglycerate kinase from Actinobacillus pleuropneumoniae serotype 5b (strain L20).